Here is a 135-residue protein sequence, read N- to C-terminus: Large ribosomal subunit protein eL32 (135 aa).

This sequence belongs to the eukaryotic ribosomal protein eL32 family.

This Methanococcus maripaludis (strain DSM 14266 / JCM 13030 / NBRC 101832 / S2 / LL) protein is Large ribosomal subunit protein eL32 (rpl32e).